A 130-amino-acid chain; its full sequence is Small ribosomal subunit protein uS9 (130 aa).

It belongs to the universal ribosomal protein uS9 family.

The polypeptide is Small ribosomal subunit protein uS9 (Hydrogenovibrio crunogenus (strain DSM 25203 / XCL-2) (Thiomicrospira crunogena)).